The chain runs to 320 residues: Dimethyladenosine transferase (320 aa).

Positions 38, 40, 65, 86, 114, and 129 each coordinate S-adenosyl-L-methionine.

It belongs to the class I-like SAM-binding methyltransferase superfamily. rRNA adenine N(6)-methyltransferase family.

The catalysed reaction is adenosine(1779)/adenosine(1780) in 18S rRNA + 4 S-adenosyl-L-methionine = N(6)-dimethyladenosine(1779)/N(6)-dimethyladenosine(1780) in 18S rRNA + 4 S-adenosyl-L-homocysteine + 4 H(+). Functionally, specifically dimethylates two adjacent adenosines in the loop of a conserved hairpin near the 3'-end of 18S rRNA in the 40S particle. The chain is Dimethyladenosine transferase (DIM1) from Kluyveromyces lactis (strain ATCC 8585 / CBS 2359 / DSM 70799 / NBRC 1267 / NRRL Y-1140 / WM37) (Yeast).